Consider the following 297-residue polypeptide: uncharacterized protein (297 aa).

Positions 46–229 (LGAGGPPPPP…RPPPYIAPPP (184 aa)) are disordered. Pro residues predominate over residues 65 to 81 (PEGPGGPPQHAPPNPPP). Positions 90 to 100 (RGGGAGGAGDG) are enriched in gly residues. The segment covering 106–117 (DAAEEYGPEDLD) has biased composition (acidic residues). The span at 137–151 (HQTRGPGRRAKKRLR) shows a compositional bias: basic residues. Residues 184-201 (ATPQAAPAAKTTPASPQT) are compositionally biased toward low complexity. Positions 219–229 (HRPPPYIAPPP) are enriched in pro residues.

This is an uncharacterized protein from Torque teno virus (isolate Human/China/CT23F/2001) (TTV).